A 332-amino-acid chain; its full sequence is Fructose-1,6-bisphosphatase class 1 (332 aa).

Residues E89, D110, L112, and D113 each contribute to the Mg(2+) site. Residues 113-116, N206, Y239, 257-259, and K269 each bind substrate; these read DGSS and YLY. E275 provides a ligand contact to Mg(2+).

Belongs to the FBPase class 1 family. In terms of assembly, homotetramer. Mg(2+) serves as cofactor.

The protein localises to the cytoplasm. The enzyme catalyses beta-D-fructose 1,6-bisphosphate + H2O = beta-D-fructose 6-phosphate + phosphate. It functions in the pathway carbohydrate biosynthesis; gluconeogenesis. The sequence is that of Fructose-1,6-bisphosphatase class 1 from Salmonella typhimurium (strain LT2 / SGSC1412 / ATCC 700720).